A 162-amino-acid polypeptide reads, in one-letter code: Large ribosomal subunit protein uL15 (162 aa).

A compositionally biased stretch (basic and acidic residues) spans 1-13 (MNLNELRDNEGSR). The interval 1-39 (MNLNELRDNEGSRYRKKRLGRGIGSGKGKTSGRGVKGQK) is disordered. The span at 21 to 35 (RGIGSGKGKTSGRGV) shows a compositional bias: gly residues.

The protein belongs to the universal ribosomal protein uL15 family. As to quaternary structure, part of the 50S ribosomal subunit.

Binds to the 23S rRNA. This is Large ribosomal subunit protein uL15 from Gluconobacter oxydans (strain 621H) (Gluconobacter suboxydans).